A 392-amino-acid chain; its full sequence is MALETKPAQDPATEIKHELDPKRKAALDTALAQVEKSFGKGSAMRLGDQPVQNVEVIPTGSLALDMALGIGGLPKGRIVEIYGPESSGKTTLALHVVANAQKKGGVAAYIDAEHALDPAYARKLGVDTDSLIVSQPDNGEQALEIADMLIRSGALDVIVIDSVAALVPKAEIEGEMGDSHVGLQARLMSQALRKMTGALAQAGTTAIFINQLREKIGVFFGNPETTTGGKALKFYASVRLDIRRIQTLKNGDEAVGNRTRVKVVKNKMAPPFKSAEFDMLYGEGISREGSVIDMAQQVGVVKKSGSWFTYEGDQLGQGREKVRQFLKDNPAITEEIENKVKAEFGLIGSADQFAEDEDAAAAAAVSEAAAADAAKDTKATAAPAAKSSRAKA.

The tract at residues 1–21 is disordered; that stretch reads MALETKPAQDPATEIKHELDP. Position 83–90 (83–90) interacts with ATP; that stretch reads GPESSGKT. The tract at residues 372 to 392 is disordered; the sequence is DAAKDTKATAAPAAKSSRAKA. A compositionally biased stretch (low complexity) spans 379-392; sequence ATAAPAAKSSRAKA.

Belongs to the RecA family.

Its subcellular location is the cytoplasm. Can catalyze the hydrolysis of ATP in the presence of single-stranded DNA, the ATP-dependent uptake of single-stranded DNA by duplex DNA, and the ATP-dependent hybridization of homologous single-stranded DNAs. It interacts with LexA causing its activation and leading to its autocatalytic cleavage. The protein is Protein RecA of Bifidobacterium breve.